A 328-amino-acid polypeptide reads, in one-letter code: tRNA uridine(34) hydroxylase (328 aa).

The Rhodanese domain occupies 130-224 (LDEDTVVLDT…YGKDPEVQGE (95 aa)). Cysteine 184 serves as the catalytic Cysteine persulfide intermediate.

This sequence belongs to the TrhO family.

It carries out the reaction uridine(34) in tRNA + AH2 + O2 = 5-hydroxyuridine(34) in tRNA + A + H2O. In terms of biological role, catalyzes oxygen-dependent 5-hydroxyuridine (ho5U) modification at position 34 in tRNAs. The protein is tRNA uridine(34) hydroxylase of Streptococcus agalactiae serotype Ia (strain ATCC 27591 / A909 / CDC SS700).